The chain runs to 1239 residues: Codanin-1 (1239 aa).

Ala2 carries the post-translational modification N-acetylalanine. Over residues Ser61–Ala72 the composition is skewed to polar residues. 2 disordered regions span residues Ser61 to Cys249 and Lys261 to Ala299. Phosphothreonine is present on Thr70. Composition is skewed to low complexity over residues Ala77–Pro88, Ala95–Arg116, and Gly138–Leu179. Residues Ala193 to Leu213 are interaction with ASF1A/B. The segment covering Cys219–Thr238 has biased composition (polar residues). A Phosphoserine modification is found at Ser270. 2 helical membrane passes run Cys317–Leu337 and Phe631–Leu651.

As to quaternary structure, interacts with ASF1A and ASF1B. Found in a cytosolic complex with ASF1A, ASF1B, IPO4 and histones H3.1 and H4. Widely expressed in adult mice, the highest levels can be measured in erythropoietic cells.

The protein resides in the cytoplasm. It is found in the nucleus. It localises to the membrane. Its function is as follows. May act as a negative regulator of ASF1 in chromatin assembly. This chain is Codanin-1 (Cdan1), found in Mus musculus (Mouse).